Reading from the N-terminus, the 513-residue chain is Steroid (22S)-hydroxylase (513 aa).

A helical transmembrane segment spans residues 8–28 (TLLPLLLLPSLLSLLLFLILL). Residues 252-277 (DIKEEDQEEEEVKTEDEAEMSKSDHV) form a disordered region. Residues 254-269 (KEEDQEEEEVKTEDEA) are compositionally biased toward acidic residues. Residue cysteine 462 participates in heme binding.

Belongs to the cytochrome P450 family. Heme is required as a cofactor. In terms of tissue distribution, expressed in stems, leaves, shoots, and roots, with a higher expression in siliques and apical shoots.

The protein resides in the membrane. The enzyme catalyses a C27-steroid + reduced [NADPH--hemoprotein reductase] + O2 = a (22S)-22-hydroxy C27-steroid + oxidized [NADPH--hemoprotein reductase] + H2O + H(+). The catalysed reaction is a C28-steroid + reduced [NADPH--hemoprotein reductase] + O2 = a (22S)-22-hydroxy C28-steroid + oxidized [NADPH--hemoprotein reductase] + H2O + H(+). It carries out the reaction a C29-steroid + reduced [NADPH--hemoprotein reductase] + O2 = a (22S)-22-hydroxy C29-steroid + oxidized [NADPH--hemoprotein reductase] + H2O + H(+). It catalyses the reaction cholesterol + reduced [NADPH--hemoprotein reductase] + O2 = (22S)-22-hydroxycholesterol + oxidized [NADPH--hemoprotein reductase] + H2O + H(+). The enzyme catalyses cholestanol + reduced [NADPH--hemoprotein reductase] + O2 = (22S)-22-hydroxycholestanol + oxidized [NADPH--hemoprotein reductase] + H2O + H(+). The catalysed reaction is campestanol + reduced [NADPH--hemoprotein reductase] + O2 = 6-deoxycathasterone + oxidized [NADPH--hemoprotein reductase] + H2O + H(+). It carries out the reaction campesterol + reduced [NADPH--hemoprotein reductase] + O2 = (22S)-22-hydroxycampesterol + oxidized [NADPH--hemoprotein reductase] + H2O + H(+). It catalyses the reaction 6-oxocampestanol + reduced [NADPH--hemoprotein reductase] + O2 = cathasterone + oxidized [NADPH--hemoprotein reductase] + H2O + H(+). The enzyme catalyses sitosterol + reduced [NADPH--hemoprotein reductase] + O2 = (22S)-22-hydroxysitosterol + oxidized [NADPH--hemoprotein reductase] + H2O + H(+). It functions in the pathway plant hormone biosynthesis; brassinosteroid biosynthesis. Catalyzes the C22-alpha-hydroxylation step in brassinosteroids biosynthesis. Converts campesterol (CR) to (22S)-22-hydroxycampesterol (22-OHCR, 22-hydroxyCR), campestanol (CN) to 6-deoxycathasterone (6-deoxoCT), and 6-oxocampestanol (6-oxoCN) to cathasterone (CT). Can also use cholesterol and cholestanol as substrates. The sequence is that of Steroid (22S)-hydroxylase from Arabidopsis thaliana (Mouse-ear cress).